We begin with the raw amino-acid sequence, 506 residues long: Maturase K (506 aa).

It belongs to the intron maturase 2 family. MatK subfamily.

It is found in the plastid. Its subcellular location is the chloroplast. Functionally, usually encoded in the trnK tRNA gene intron. Probably assists in splicing its own and other chloroplast group II introns. The polypeptide is Maturase K (Manihot esculenta (Cassava)).